A 181-amino-acid chain; its full sequence is Ribonuclease HII (181 aa).

One can recognise an RNase H type-2 domain in the interval 1 to 181 (MICGIDEVGR…SLHRRNFKLI (181 aa)). Residues Asp-6, Glu-7, and Asp-98 each coordinate a divalent metal cation.

Belongs to the RNase HII family. Mn(2+) is required as a cofactor. Mg(2+) serves as cofactor.

The protein localises to the cytoplasm. The catalysed reaction is Endonucleolytic cleavage to 5'-phosphomonoester.. Its function is as follows. Endonuclease that specifically degrades the RNA of RNA-DNA hybrids. This Borrelia garinii subsp. bavariensis (strain ATCC BAA-2496 / DSM 23469 / PBi) (Borreliella bavariensis) protein is Ribonuclease HII.